Reading from the N-terminus, the 158-residue chain is 2-C-methyl-D-erythritol 2,4-cyclodiphosphate synthase (158 aa).

2 residues coordinate a divalent metal cation: Asp9 and His11. 4-CDP-2-C-methyl-D-erythritol 2-phosphate-binding positions include 9–11 and 35–36; these read DVH and HS. Residue His43 coordinates a divalent metal cation. 4-CDP-2-C-methyl-D-erythritol 2-phosphate is bound by residues 57 to 59, 62 to 66, 101 to 107, 133 to 136, Phe140, and Arg143; these read DIG, FPDTD, AQAPKMA, and TTTE.

It belongs to the IspF family. In terms of assembly, homotrimer. The cofactor is a divalent metal cation.

The enzyme catalyses 4-CDP-2-C-methyl-D-erythritol 2-phosphate = 2-C-methyl-D-erythritol 2,4-cyclic diphosphate + CMP. It functions in the pathway isoprenoid biosynthesis; isopentenyl diphosphate biosynthesis via DXP pathway; isopentenyl diphosphate from 1-deoxy-D-xylulose 5-phosphate: step 4/6. Its function is as follows. Involved in the biosynthesis of isopentenyl diphosphate (IPP) and dimethylallyl diphosphate (DMAPP), two major building blocks of isoprenoid compounds. Catalyzes the conversion of 4-diphosphocytidyl-2-C-methyl-D-erythritol 2-phosphate (CDP-ME2P) to 2-C-methyl-D-erythritol 2,4-cyclodiphosphate (ME-CPP) with a corresponding release of cytidine 5-monophosphate (CMP). The polypeptide is 2-C-methyl-D-erythritol 2,4-cyclodiphosphate synthase (Vibrio vulnificus (strain CMCP6)).